The primary structure comprises 218 residues: Ribose-5-phosphate isomerase A (218 aa).

Substrate contacts are provided by residues 28–31 (TGST), 81–84 (DGAD), and 94–97 (KGGG). E103 acts as the Proton acceptor in catalysis. Residue K121 coordinates substrate.

The protein belongs to the ribose 5-phosphate isomerase family. As to quaternary structure, homodimer.

The enzyme catalyses aldehydo-D-ribose 5-phosphate = D-ribulose 5-phosphate. It functions in the pathway carbohydrate degradation; pentose phosphate pathway; D-ribose 5-phosphate from D-ribulose 5-phosphate (non-oxidative stage): step 1/1. Functionally, catalyzes the reversible conversion of ribose-5-phosphate to ribulose 5-phosphate. The protein is Ribose-5-phosphate isomerase A of Sodalis glossinidius (strain morsitans).